Reading from the N-terminus, the 211-residue chain is Thiamine-phosphate synthase (211 aa).

4-amino-2-methyl-5-(diphosphooxymethyl)pyrimidine-binding positions include 39 to 41 (QLR) and Asn-71. Residues Asp-72 and Asp-91 each contribute to the Mg(2+) site. Residue Ser-110 coordinates 4-amino-2-methyl-5-(diphosphooxymethyl)pyrimidine. 136 to 138 (TGT) serves as a coordination point for 2-[(2R,5Z)-2-carboxy-4-methylthiazol-5(2H)-ylidene]ethyl phosphate. A 4-amino-2-methyl-5-(diphosphooxymethyl)pyrimidine-binding site is contributed by Lys-139. 2-[(2R,5Z)-2-carboxy-4-methylthiazol-5(2H)-ylidene]ethyl phosphate is bound by residues Gly-167 and 187 to 188 (VS).

This sequence belongs to the thiamine-phosphate synthase family. The cofactor is Mg(2+).

The enzyme catalyses 2-[(2R,5Z)-2-carboxy-4-methylthiazol-5(2H)-ylidene]ethyl phosphate + 4-amino-2-methyl-5-(diphosphooxymethyl)pyrimidine + 2 H(+) = thiamine phosphate + CO2 + diphosphate. It catalyses the reaction 2-(2-carboxy-4-methylthiazol-5-yl)ethyl phosphate + 4-amino-2-methyl-5-(diphosphooxymethyl)pyrimidine + 2 H(+) = thiamine phosphate + CO2 + diphosphate. The catalysed reaction is 4-methyl-5-(2-phosphooxyethyl)-thiazole + 4-amino-2-methyl-5-(diphosphooxymethyl)pyrimidine + H(+) = thiamine phosphate + diphosphate. The protein operates within cofactor biosynthesis; thiamine diphosphate biosynthesis; thiamine phosphate from 4-amino-2-methyl-5-diphosphomethylpyrimidine and 4-methyl-5-(2-phosphoethyl)-thiazole: step 1/1. In terms of biological role, condenses 4-methyl-5-(beta-hydroxyethyl)thiazole monophosphate (THZ-P) and 2-methyl-4-amino-5-hydroxymethyl pyrimidine pyrophosphate (HMP-PP) to form thiamine monophosphate (TMP). In Xanthobacter autotrophicus (strain ATCC BAA-1158 / Py2), this protein is Thiamine-phosphate synthase.